The primary structure comprises 697 residues: tRNA 5-methylaminomethyl-2-thiouridine biosynthesis bifunctional protein MnmC (697 aa).

Residues Met1–Ser272 form a tRNA (mnm(5)s(2)U34)-methyltransferase region. The FAD-dependent cmnm(5)s(2)U34 oxidoreductase stretch occupies residues Ile300 to Ile697.

It in the N-terminal section; belongs to the methyltransferase superfamily. tRNA (mnm(5)s(2)U34)-methyltransferase family. This sequence in the C-terminal section; belongs to the DAO family. The cofactor is FAD.

Its subcellular location is the cytoplasm. It catalyses the reaction 5-aminomethyl-2-thiouridine(34) in tRNA + S-adenosyl-L-methionine = 5-methylaminomethyl-2-thiouridine(34) in tRNA + S-adenosyl-L-homocysteine + H(+). Functionally, catalyzes the last two steps in the biosynthesis of 5-methylaminomethyl-2-thiouridine (mnm(5)s(2)U) at the wobble position (U34) in tRNA. Catalyzes the FAD-dependent demodification of cmnm(5)s(2)U34 to nm(5)s(2)U34, followed by the transfer of a methyl group from S-adenosyl-L-methionine to nm(5)s(2)U34, to form mnm(5)s(2)U34. The protein is tRNA 5-methylaminomethyl-2-thiouridine biosynthesis bifunctional protein MnmC of Psychrobacter cryohalolentis (strain ATCC BAA-1226 / DSM 17306 / VKM B-2378 / K5).